The chain runs to 349 residues: MNVTSNATAAGSFPLAFGLKTSFGFMHYAKAPAINLRPKESLLPEMSDGVLALVAPVVAYWALSGIFHVIDTFHLAEKYRIHPSEEVAKRNKASRMHVFLEVILQHIIQTIVGLIFMHFEPIYMTGFEENAMWKLRADLPRIIPDAAIYYGYMYGMSALKIFAGFLFVDTWQYFLHRLMHMNKTLYKWFHSVHHELYVPYAYGALFNNPVEGFLLDTLGTGIAMTLTHLTHREQIILFTFATMKTVDDHCGYALPLDPFQWLFPNNAVYHDIHHQQFGIKTNFAQPFFTFWDNLFQTNFKGFEEYQKKQRRVTIDKYKEFLQERELEKKEKLKNFKAMNAAENEVKKEK.

The next 5 helical transmembrane spans lie at Ala9–Ala29, Val50–Ile70, Phe99–Phe119, Ile148–Val168, and Pro209–Leu229. Residues Phe162–Thr297 enclose the Fatty acid hydroxylase domain.

The protein belongs to the sterol desaturase family.

Its subcellular location is the endoplasmic reticulum membrane. The enzyme catalyses sphinganine + 2 Fe(II)-[cytochrome b5] + O2 + 2 H(+) = (4R)-hydroxysphinganine + 2 Fe(III)-[cytochrome b5] + H2O. The catalysed reaction is an N-acylsphinganine + 2 Fe(II)-[cytochrome b5] + O2 + 2 H(+) = an N-acyl-(4R)-4-hydroxysphinganine + 2 Fe(III)-[cytochrome b5] + H2O. It catalyses the reaction an N-acyleicosasphinganine + 2 Fe(II)-[cytochrome b5] + O2 + 2 H(+) = N-acyl-4-hydroxyeicosasphinganine + 2 Fe(III)-[cytochrome b5] + H2O. Its pathway is membrane lipid metabolism; sphingolipid biosynthesis. In terms of biological role, required for hydroxylation of C-4 in the sphingoid moiety of ceramide. Catalyzes the conversion of sphinganine to phytosphingosine in sphingolipid biosynthesis. Involved in the response to syringomycin. This Saccharomyces cerevisiae (strain ATCC 204508 / S288c) (Baker's yeast) protein is Sphingolipid C4-hydroxylase SUR2 (SUR2).